The sequence spans 335 residues: Leucine-rich repeat-containing protein 39 (335 aa).

Residues 10 to 47 (AVNAVKEVWEKRIKKLNEDLKREKEFQHKLVRIWEERV) adopt a coiled-coil conformation. 9 LRR repeats span residues 84–105 (QLQE…IGRF), 107–128 (NLIV…IGLL), 130–151 (RLQE…LSNC), 153–176 (SLEK…SNLL), 177–197 (KLTH…AVLN), 200–221 (ALEW…IERM), 223–244 (NLHT…ISNM), 246–267 (NLGT…MEEM), and 269–290 (NLRF…PPSE).

Interacts with MYH7 (via C-terminus). In terms of tissue distribution, highly expressed in skeletal muscle and heart. Not detected in other tissues tested.

The protein localises to the cytoplasm. The protein resides in the myofibril. It is found in the sarcomere. Its subcellular location is the m line. Component of the sarcomeric M-band which plays a role in myocyte response to biomechanical stress. May regulate expression of other M-band proteins via an SRF-dependent pathway. Important for normal contractile function in heart. This chain is Leucine-rich repeat-containing protein 39 (LRRC39), found in Homo sapiens (Human).